Reading from the N-terminus, the 398-residue chain is Phosphoglycerate kinase (398 aa).

Substrate contacts are provided by residues 21 to 23, R36, 59 to 62, R119, and R157; these read DFN and HLGR. ATP-binding positions include K208, G296, E327, and 354–357; that span reads GGDS.

The protein belongs to the phosphoglycerate kinase family. As to quaternary structure, monomer.

The protein localises to the cytoplasm. It carries out the reaction (2R)-3-phosphoglycerate + ATP = (2R)-3-phospho-glyceroyl phosphate + ADP. It participates in carbohydrate degradation; glycolysis; pyruvate from D-glyceraldehyde 3-phosphate: step 2/5. The polypeptide is Phosphoglycerate kinase (Streptococcus sanguinis (strain SK36)).